The sequence spans 209 residues: Thymidine kinase (209 aa).

ATP is bound by residues 9-16 (AAMNAGKS) and 88-91 (DEAQ). E89 functions as the Proton acceptor in the catalytic mechanism. Zn(2+)-binding residues include C146, C148, C183, and H186.

It belongs to the thymidine kinase family. In terms of assembly, homotetramer.

The protein resides in the cytoplasm. It carries out the reaction thymidine + ATP = dTMP + ADP + H(+). The polypeptide is Thymidine kinase (Legionella pneumophila (strain Paris)).